A 428-amino-acid polypeptide reads, in one-letter code: Magnesium transporter MRS2-C (428 aa).

2 helical membrane-spanning segments follow: residues 364–384 (LLLT…GVFG) and 400–420 (WTLV…IWYF). Positions 384-386 (GMN) match the Required for magnesium transport activity motif.

It belongs to the CorA metal ion transporter (MIT) (TC 1.A.35.5) family.

The protein localises to the membrane. Functionally, magnesium transporter that may mediate the influx of magnesium. This Oryza sativa subsp. indica (Rice) protein is Magnesium transporter MRS2-C.